A 391-amino-acid polypeptide reads, in one-letter code: S-adenosylmethionine synthase (391 aa).

ATP is bound at residue His19. Residue Asp21 participates in Mg(2+) binding. Glu47 serves as a coordination point for K(+). L-methionine contacts are provided by Glu60 and Gln103. The segment at 103-113 (QSPDIAQGVDR) is flexible loop. Residues 168–170 (DGK), 236–237 (RF), Asp245, 251–252 (RK), Ala268, and Lys272 contribute to the ATP site. Asp245 serves as a coordination point for L-methionine. Residue Lys276 participates in L-methionine binding.

This sequence belongs to the AdoMet synthase family. As to quaternary structure, homotetramer; dimer of dimers. It depends on Mg(2+) as a cofactor. Requires K(+) as cofactor.

Its subcellular location is the cytoplasm. It carries out the reaction L-methionine + ATP + H2O = S-adenosyl-L-methionine + phosphate + diphosphate. It participates in amino-acid biosynthesis; S-adenosyl-L-methionine biosynthesis; S-adenosyl-L-methionine from L-methionine: step 1/1. Functionally, catalyzes the formation of S-adenosylmethionine (AdoMet) from methionine and ATP. The overall synthetic reaction is composed of two sequential steps, AdoMet formation and the subsequent tripolyphosphate hydrolysis which occurs prior to release of AdoMet from the enzyme. This chain is S-adenosylmethionine synthase, found in Oleidesulfovibrio alaskensis (strain ATCC BAA-1058 / DSM 17464 / G20) (Desulfovibrio alaskensis).